We begin with the raw amino-acid sequence, 273 residues long: Protein BRANCHLESS TRICHOME (273 aa).

Residues 1-12 show a composition bias toward polar residues; the sequence is MKDMKMQSSPET. The interval 1–30 is disordered; the sequence is MKDMKMQSSPETMMTRIPTPDPHSTGVRED. Positions 69–199 form a coiled coil; sequence IKVFMESELG…GERERNRMMK (131 aa).

In terms of assembly, interacts with STI.

In terms of biological role, acts as a key regulator of trichome branching. Could participate with STI in the same pathway. Also plays a role in integrating endoreplication levels with cell shape. This is Protein BRANCHLESS TRICHOME (BLT) from Arabidopsis thaliana (Mouse-ear cress).